The sequence spans 349 residues: MKDNNIIELKGITKSYGKDTILDNLSLNIKKNEFLTLLGPSGCGKTTTLKIIAGFETADSGQVVFENNIINDIPPYERQLNTVFQKYALFPHMNVYENIAFGLKLKKIPKDIIDQKVKEMLKLVALEGYENRDIEALSGGQQQRVAIARALVNEPKVLLLDEPLGALDMKLRKEMQIELKKIQQKLGITFIFVTHDQEEALTMSDTIVVMNKGEIQQMGSPEDIYNEPANSFVAKFIGESNIVDGIMLDDFKVEFGGKIFDCVDKGFEKNEAIEVVIRPEDFEMVKYENGMLKGTVTSIIFKGVHYEIEVKNENHTWILHNTKHAEIGSKIGLSLDPESIHIMKKESDV.

One can recognise an ABC transporter domain in the interval 7–237 (IELKGITKSY…PANSFVAKFI (231 aa)). An ATP-binding site is contributed by 39 to 46 (GPSGCGKT).

This sequence belongs to the ABC transporter superfamily. Spermidine/putrescine importer (TC 3.A.1.11.1) family. In terms of assembly, the complex is composed of two ATP-binding proteins (PotA), two transmembrane proteins (PotB and PotC) and a solute-binding protein (PotD).

The protein resides in the cell membrane. The enzyme catalyses ATP + H2O + polyamine-[polyamine-binding protein]Side 1 = ADP + phosphate + polyamineSide 2 + [polyamine-binding protein]Side 1.. In terms of biological role, part of the ABC transporter complex PotABCD involved in spermidine/putrescine import. Responsible for energy coupling to the transport system. The protein is Spermidine/putrescine import ATP-binding protein PotA of Clostridium perfringens (strain SM101 / Type A).